A 714-amino-acid chain; its full sequence is Polynucleotide 5'-hydroxyl-kinase NOL9 (714 aa).

N-acetylalanine is present on Ala-2. The Nucleolar localization signal motif lies at 31 to 47; the sequence is RRGRRRFGVLTRVELRR. Residues 80–133 form a disordered region; that stretch reads ARSRPAPRSPPTPSVPPAPCTASATCSLLNPRNHSTPQSRAGRPVRKVSPNVTQ. The span at 86-98 shows a compositional bias: pro residues; that stretch reads PRSPPTPSVPPAP. The segment covering 107 to 118 has biased composition (polar residues); sequence LLNPRNHSTPQS. Residue Ser-128 is modified to Phosphoserine. 322–329 contacts ATP; sequence GACDIGKS. Residues 495–714 form an interaction with LAS1L region; the sequence is FTYEEKESSP…PRHKLRQRRK (220 aa). Lys-500 is covalently cross-linked (Glycyl lysine isopeptide (Lys-Gly) (interchain with G-Cter in SUMO2)). Ser-502 is modified (phosphoserine).

It belongs to the Clp1 family. NOL9/GRC3 subfamily. As to quaternary structure, interacts with PELP1, WDR18 and SENP3. Interacts with LAS1L to form an ITS2 pre-rRNA endonuclease-kinase complex.

The protein resides in the nucleus. It localises to the nucleolus. The catalysed reaction is a 5'-end dephospho-2'-deoxyribonucleoside-DNA + ATP = a 5'-end 5'-phospho-2'-deoxyribonucleoside-DNA + ADP + H(+). It catalyses the reaction a 5'-end dephospho-ribonucleoside-RNA + ATP = a 5'-end 5'-phospho-ribonucleoside-RNA + ADP + H(+). Functionally, polynucleotide kinase that can phosphorylate the 5'-hydroxyl groups of single-stranded and double-stranded RNA and DNA substrates. Involved in rRNA processing and its kinase activity is required for the processing of the 32S precursor into 5.8S and 28S rRNAs, more specifically for the generation of the major 5.8S(S) form. Required for the efficient pre-rRNA processing of internal transcribed spacer 2 (ITS2). Associates with LAS1L to form an ITS2 pre-rRNA endonuclease-kinase complex and is responsible for the transport of this complex into the nucleolus. The protein is Polynucleotide 5'-hydroxyl-kinase NOL9 of Mus musculus (Mouse).